The following is an 865-amino-acid chain: MISTKELRNKFISYFESKNHSHQPSSSLIPFGDDTLLFTNAGMVQFKDVFLGLEKRDFSRAVTVQKCLRAGGKHNDLDNVGYTARHHTFFEMLGNFSFGDYFKKDAISFAWEFLTKEIKLPVEKLWVTIYATDDEAFDVWHNHIGLPKERIIRIDSNDNFWSMGDTGPCGPCTEIFYDHGEDVAGGLPGTPDEDGDRYIEIWNIVFMQFNRHADGTVTDLPKPSVDTGMGLERIAAVLQDVHSNYDIDLFQALIKKAQEVTNADDINSPSLKVVADHIRSCAFLIADGVLPSNEGRGYVLRRIIRRAIRHGNKLGAKDIFFYKLVAELINQMGEAYPQLIDKRELIEKTLIKEEELFLKTIENGIKIFDTEIVSLKSDIISGEIAFRLYDTYGFPLDLTADMAREKGLKVDEEAFKEQMLKQKQRSKEAGKFNVDYNSIINSQAKSDFRGYSTLIEDAKVLEIYQDGQPVNAIQAGSTAVIVLDRTPFYAESGGQVGDKGVLEGVGVEFIVEDVQKSGEAILHIGKLSKGILNTYDEVTARVNDSVRLATAANHSATHLLHKVLKIILGSHAEQKGSLVDDNKLRFDFTHDKAISRVEIEQIETLVNQQIRANYPVATIETSQEKAKSLGAEALFGEKYGDIVRVISMGDFSIELCGGTHVAYTGDIGLFKIVSESGIASGIRRIEAITANKAIKYTFATENKLAAIKEITKSNDSNLLDKLQSMLEQLKNQEKEIAKLKKDILSGANSDIKESSIDGIKLIIANLEGVDIKTLREKIDDYKSKNDKMVAVLSTINADKVQFVIGVSKSITSLIKAGDIAKEFSGYIDGKGGGRPDMAQGGGNNSTNIDKALSDLENHISINIKK.

His554, His558, Cys656, and His660 together coordinate Zn(2+).

It belongs to the class-II aminoacyl-tRNA synthetase family. It depends on Zn(2+) as a cofactor.

The protein resides in the cytoplasm. It carries out the reaction tRNA(Ala) + L-alanine + ATP = L-alanyl-tRNA(Ala) + AMP + diphosphate. Catalyzes the attachment of alanine to tRNA(Ala) in a two-step reaction: alanine is first activated by ATP to form Ala-AMP and then transferred to the acceptor end of tRNA(Ala). Also edits incorrectly charged Ser-tRNA(Ala) and Gly-tRNA(Ala) via its editing domain. The protein is Alanine--tRNA ligase of Francisella philomiragia subsp. philomiragia (strain ATCC 25017 / CCUG 19701 / FSC 153 / O#319-036).